A 620-amino-acid chain; its full sequence is 1-deoxy-D-xylulose-5-phosphate synthase (620 aa).

Thiamine diphosphate contacts are provided by residues His75 and 116 to 118 (AHS). Mg(2+) is bound at residue Asp147. Thiamine diphosphate is bound by residues 148 to 149 (GA), Asn177, Tyr284, and Glu366. A Mg(2+)-binding site is contributed by Asn177.

This sequence belongs to the transketolase family. DXPS subfamily. Homodimer. The cofactor is Mg(2+). Thiamine diphosphate is required as a cofactor.

It carries out the reaction D-glyceraldehyde 3-phosphate + pyruvate + H(+) = 1-deoxy-D-xylulose 5-phosphate + CO2. It participates in metabolic intermediate biosynthesis; 1-deoxy-D-xylulose 5-phosphate biosynthesis; 1-deoxy-D-xylulose 5-phosphate from D-glyceraldehyde 3-phosphate and pyruvate: step 1/1. Functionally, catalyzes the acyloin condensation reaction between C atoms 2 and 3 of pyruvate and glyceraldehyde 3-phosphate to yield 1-deoxy-D-xylulose-5-phosphate (DXP). The chain is 1-deoxy-D-xylulose-5-phosphate synthase from Bordetella avium (strain 197N).